The primary structure comprises 363 residues: Oxygen-dependent coproporphyrinogen-III oxidase (363 aa).

Ser-119 serves as a coordination point for substrate. 2 residues coordinate a divalent metal cation: His-123 and His-133. His-133 (proton donor) is an active-site residue. 135–137 (NYR) contributes to the substrate binding site. The a divalent metal cation site is built by His-167 and His-197. The interval 287-322 (YVEFNLVWDRGTIFGLQTNGRTESILMSLPPLVRWE) is important for dimerization.

The protein belongs to the aerobic coproporphyrinogen-III oxidase family. As to quaternary structure, homodimer. A divalent metal cation is required as a cofactor.

It localises to the cytoplasm. The enzyme catalyses coproporphyrinogen III + O2 + 2 H(+) = protoporphyrinogen IX + 2 CO2 + 2 H2O. The protein operates within porphyrin-containing compound metabolism; protoporphyrin-IX biosynthesis; protoporphyrinogen-IX from coproporphyrinogen-III (O2 route): step 1/1. Its function is as follows. Involved in the heme and chlorophyll biosynthesis. Catalyzes the aerobic oxidative decarboxylation of propionate groups of rings A and B of coproporphyrinogen-III to yield the vinyl groups in protoporphyrinogen-IX. The protein is Oxygen-dependent coproporphyrinogen-III oxidase of Parasynechococcus marenigrum (strain WH8102).